Consider the following 209-residue polypeptide: MNEELTSLTEYQRYGHDYAKYPRRIAEELQRYGGNSFANFFRDEGVLYKEILCDACDHLDINYNERSATSLIEQNMLSKLLKDSLEKMSGREIKELCDGLGMPNIDKVIGENKQVLIASVLTLFKAGGSHSYALAVAVADAMVRQTLGHGLSSVVGKVALKKTLDILAGPIGWVITGALVSINLAGPAYRVTVPACVLVATLRKKLKAE.

Belongs to the UPF0174 family.

This is UPF0174 protein jhp_1493 from Helicobacter pylori (strain J99 / ATCC 700824) (Campylobacter pylori J99).